Consider the following 202-residue polypeptide: Pycsar effector protein PtPycTM (202 aa).

3 helical membrane-spanning segments follow: residues 60–80 (GVVL…AADI), 85–105 (LVIL…AVLA), and 181–201 (ILVG…VALG).

Its subcellular location is the cell membrane. Functionally, pycsar (pyrimidine cyclase system for antiphage resistance) provides immunity against bacteriophage. The pyrimidine cyclase (PycC) synthesizes cyclic nucleotides in response to infection; these serve as specific second messenger signals. The signals activate the adjacent effector, leading to bacterial cell death and abortive phage infection. A clade D Pycsar system. In terms of biological role, the effector gene of a two-gene Pycsar system. Expression of this and adjacent uridylate cyclase PtPycC (AC A0A4V2JTK3) probably confers resistance to bacteriophage. The genes are probably only expressed in response to bacteriophage infection. Probably only responds to cUMP (produced by its cognate NTP cyclase), acts by impairing membrane integrity. This chain is Pycsar effector protein PtPycTM, found in Propioniciclava tarda.